The sequence spans 311 residues: Methionyl-tRNA formyltransferase (311 aa).

S110–P113 is a (6S)-5,6,7,8-tetrahydrofolate binding site.

The protein belongs to the Fmt family.

The enzyme catalyses L-methionyl-tRNA(fMet) + (6R)-10-formyltetrahydrofolate = N-formyl-L-methionyl-tRNA(fMet) + (6S)-5,6,7,8-tetrahydrofolate + H(+). Attaches a formyl group to the free amino group of methionyl-tRNA(fMet). The formyl group appears to play a dual role in the initiator identity of N-formylmethionyl-tRNA by promoting its recognition by IF2 and preventing the misappropriation of this tRNA by the elongation apparatus. This Streptococcus sanguinis (strain SK36) protein is Methionyl-tRNA formyltransferase.